We begin with the raw amino-acid sequence, 354 residues long: Glycerol-3-phosphate dehydrogenase [NAD(+)], glycosomal (354 aa).

NAD(+) contacts are provided by residues 15–20 (GSGAFG), F90, K118, and A150. K118 serves as a coordination point for substrate. The active-site Proton acceptor is the K203. NAD(+) is bound by residues R267 and E293. Residue 267-268 (RN) participates in substrate binding. Residues 352–354 (SKM) carry the Microbody targeting signal motif.

This sequence belongs to the NAD-dependent glycerol-3-phosphate dehydrogenase family.

The protein resides in the glycosome. The enzyme catalyses sn-glycerol 3-phosphate + NAD(+) = dihydroxyacetone phosphate + NADH + H(+). The sequence is that of Glycerol-3-phosphate dehydrogenase [NAD(+)], glycosomal (GPD) from Trypanosoma brucei brucei.